The primary structure comprises 378 residues: Succinyl-diaminopimelate desuccinylase (378 aa).

His-68 lines the Zn(2+) pocket. Asp-70 is an active-site residue. Asp-101 is a binding site for Zn(2+). Catalysis depends on Glu-135, which acts as the Proton acceptor. Residues Glu-136, Glu-164, and His-350 each coordinate Zn(2+).

The protein belongs to the peptidase M20A family. DapE subfamily. As to quaternary structure, homodimer. Zn(2+) serves as cofactor. Co(2+) is required as a cofactor.

The enzyme catalyses N-succinyl-(2S,6S)-2,6-diaminopimelate + H2O = (2S,6S)-2,6-diaminopimelate + succinate. Its pathway is amino-acid biosynthesis; L-lysine biosynthesis via DAP pathway; LL-2,6-diaminopimelate from (S)-tetrahydrodipicolinate (succinylase route): step 3/3. Functionally, catalyzes the hydrolysis of N-succinyl-L,L-diaminopimelic acid (SDAP), forming succinate and LL-2,6-diaminopimelate (DAP), an intermediate involved in the bacterial biosynthesis of lysine and meso-diaminopimelic acid, an essential component of bacterial cell walls. This chain is Succinyl-diaminopimelate desuccinylase, found in Vibrio campbellii (strain ATCC BAA-1116).